A 165-amino-acid chain; its full sequence is Peptide methionine sulfoxide reductase MsrA (165 aa).

Residue Cys-11 is part of the active site.

It belongs to the MsrA Met sulfoxide reductase family.

It carries out the reaction L-methionyl-[protein] + [thioredoxin]-disulfide + H2O = L-methionyl-(S)-S-oxide-[protein] + [thioredoxin]-dithiol. It catalyses the reaction [thioredoxin]-disulfide + L-methionine + H2O = L-methionine (S)-S-oxide + [thioredoxin]-dithiol. Has an important function as a repair enzyme for proteins that have been inactivated by oxidation. Catalyzes the reversible oxidation-reduction of methionine sulfoxide in proteins to methionine. This is Peptide methionine sulfoxide reductase MsrA from Ureaplasma parvum serovar 3 (strain ATCC 27815 / 27 / NCTC 11736).